We begin with the raw amino-acid sequence, 74 residues long: Large ribosomal subunit protein bL31 (74 aa).

Cysteine 17, cysteine 19, cysteine 38, and cysteine 41 together coordinate Zn(2+).

This sequence belongs to the bacterial ribosomal protein bL31 family. Type A subfamily. Part of the 50S ribosomal subunit. Zn(2+) serves as cofactor.

Its function is as follows. Binds the 23S rRNA. The polypeptide is Large ribosomal subunit protein bL31 (Gloeobacter violaceus (strain ATCC 29082 / PCC 7421)).